Here is a 276-residue protein sequence, read N- to C-terminus: MIKLGSHVSFKAPDYLCGAIKESLDNGANCAMIYLGPPQNSTRISVEKYHYEDYLAKYSSQIKAEDIVVHAPYIVNLANRSKQEFAIDFLVAECQRANYIGIKYLVLHPGFHNNLYPVKEALDILVFGLKKILEQTKDITICLETMAGKGSEICSNFEDIKYVIDQVNNDRVAMCLDTCHIWDAGYNIKDYDAFKKYLIDNDYLKLIKVIHLNDSLNDRASHKDRHANIDKGYIKLETLKRFVHDKDFDNIPIILETPRTKDWSPYKDEIKTLLAK.

Positions 70, 108, 144, 177, 180, 211, 224, 226, and 256 each coordinate Zn(2+).

This sequence belongs to the AP endonuclease 2 family. Zn(2+) is required as a cofactor.

It catalyses the reaction Endonucleolytic cleavage to 5'-phosphooligonucleotide end-products.. Its function is as follows. Endonuclease IV plays a role in DNA repair. It cleaves phosphodiester bonds at apurinic or apyrimidinic (AP) sites, generating a 3'-hydroxyl group and a 5'-terminal sugar phosphate. This chain is Probable endonuclease 4, found in Metamycoplasma arthritidis (strain 158L3-1) (Mycoplasma arthritidis).